The sequence spans 335 residues: tRNA N6-adenosine threonylcarbamoyltransferase (335 aa).

A divalent metal cation is bound by residues His-109, His-113, and Tyr-130. Residues 130 to 134 (YVSGG), Asp-162, Gly-177, Glu-181, and Asn-266 each bind substrate. Asp-294 contacts a divalent metal cation.

It belongs to the KAE1 / TsaD family. As to quaternary structure, component of the EKC/KEOPS complex composed of at least GON7, TP53RK, TPRKB, OSGEP and LAGE3; the whole complex dimerizes. Requires a divalent metal cation as cofactor. As to expression, widely expressed at low level. Expressed at intermediate level in lung. Weakly expressed in testis, skeletal muscle, kidney, liver, spleen, brain and heart.

It is found in the cytoplasm. The protein localises to the nucleus. It catalyses the reaction L-threonylcarbamoyladenylate + adenosine(37) in tRNA = N(6)-L-threonylcarbamoyladenosine(37) in tRNA + AMP + H(+). In terms of biological role, component of the EKC/KEOPS complex that is required for the formation of a threonylcarbamoyl group on adenosine at position 37 (t(6)A37) in tRNAs that read codons beginning with adenine. The complex is probably involved in the transfer of the threonylcarbamoyl moiety of threonylcarbamoyl-AMP (TC-AMP) to the N6 group of A37. OSGEP likely plays a direct catalytic role in this reaction, but requires other protein(s) of the complex to fulfill this activity. The sequence is that of tRNA N6-adenosine threonylcarbamoyltransferase (Osgep) from Mus musculus (Mouse).